The following is a 370-amino-acid chain: Aspartate-semialdehyde dehydrogenase 1 (370 aa).

Residues 9-12, 36-37, and Gln-72 each bind NADP(+); these read RGMV and TS. Arg-101 serves as a coordination point for phosphate. The Acyl-thioester intermediate role is filled by Cys-134. Position 134 is an S-cysteinyl cysteine; in inhibited form (Cys-134). Gln-161 contributes to the substrate binding site. NADP(+)-binding positions include 164–165 and Pro-192; that span reads SG. Glu-240 serves as a coordination point for substrate. Lys-243 provides a ligand contact to phosphate. Substrate is bound at residue Arg-267. The Proton acceptor role is filled by His-274. Gln-350 contacts NADP(+).

This sequence belongs to the aspartate-semialdehyde dehydrogenase family. Homodimer.

The catalysed reaction is L-aspartate 4-semialdehyde + phosphate + NADP(+) = 4-phospho-L-aspartate + NADPH + H(+). The protein operates within amino-acid biosynthesis; L-lysine biosynthesis via DAP pathway; (S)-tetrahydrodipicolinate from L-aspartate: step 2/4. It participates in amino-acid biosynthesis; L-methionine biosynthesis via de novo pathway; L-homoserine from L-aspartate: step 2/3. It functions in the pathway amino-acid biosynthesis; L-threonine biosynthesis; L-threonine from L-aspartate: step 2/5. Its activity is regulated as follows. Inhibited by S-methyl-L-cysteine sulfoxide in vitro, via the formation of a covalently bound cysteine at the active site Cys-134. Functionally, catalyzes the NADPH-dependent formation of L-aspartate-semialdehyde (L-ASA) by the reductive dephosphorylation of L-aspartyl-4-phosphate. This is Aspartate-semialdehyde dehydrogenase 1 (asd1) from Vibrio cholerae serotype O1 (strain ATCC 39315 / El Tor Inaba N16961).